Here is a 638-residue protein sequence, read N- to C-terminus: Phosphomethylpyrimidine synthase (638 aa).

Residues N235, M264, Y293, H329, 349–351, 390–393, and E429 each bind substrate; these read SRG and DGLR. Zn(2+) is bound at residue H433. Y456 is a binding site for substrate. Residue H497 coordinates Zn(2+). [4Fe-4S] cluster is bound by residues C577, C580, and C585.

It belongs to the ThiC family. In terms of assembly, homodimer. [4Fe-4S] cluster serves as cofactor.

The enzyme catalyses 5-amino-1-(5-phospho-beta-D-ribosyl)imidazole + S-adenosyl-L-methionine = 4-amino-2-methyl-5-(phosphooxymethyl)pyrimidine + CO + 5'-deoxyadenosine + formate + L-methionine + 3 H(+). Its pathway is cofactor biosynthesis; thiamine diphosphate biosynthesis. Its function is as follows. Catalyzes the synthesis of the hydroxymethylpyrimidine phosphate (HMP-P) moiety of thiamine from aminoimidazole ribotide (AIR) in a radical S-adenosyl-L-methionine (SAM)-dependent reaction. The protein is Phosphomethylpyrimidine synthase of Polaromonas naphthalenivorans (strain CJ2).